The following is a 140-amino-acid chain: Large ribosomal subunit protein uL16 (140 aa).

The protein belongs to the universal ribosomal protein uL16 family. Part of the 50S ribosomal subunit.

Its function is as follows. Binds 23S rRNA and is also seen to make contacts with the A and possibly P site tRNAs. This Geotalea uraniireducens (strain Rf4) (Geobacter uraniireducens) protein is Large ribosomal subunit protein uL16.